The following is a 31-amino-acid chain: Cytochrome b6-f complex subunit 6 (31 aa).

A helical membrane pass occupies residues 4–24 (ITSYFGFLLAVLTITSALFIG).

This sequence belongs to the PetL family. As to quaternary structure, the 4 large subunits of the cytochrome b6-f complex are cytochrome b6, subunit IV (17 kDa polypeptide, PetD), cytochrome f and the Rieske protein, while the 4 small subunits are PetG, PetL, PetM and PetN. The complex functions as a dimer.

The protein localises to the plastid. It is found in the chloroplast thylakoid membrane. Its function is as follows. Component of the cytochrome b6-f complex, which mediates electron transfer between photosystem II (PSII) and photosystem I (PSI), cyclic electron flow around PSI, and state transitions. PetL is important for photoautotrophic growth as well as for electron transfer efficiency and stability of the cytochrome b6-f complex. The chain is Cytochrome b6-f complex subunit 6 from Cucumis sativus (Cucumber).